The following is a 341-amino-acid chain: Methionine import ATP-binding protein MetN (341 aa).

Positions 2-237 (IELCGLKKSF…PESLARKMLY (236 aa)) constitute an ABC transporter domain. 34–41 (GKSGAGKS) serves as a coordination point for ATP.

The protein belongs to the ABC transporter superfamily. Methionine importer (TC 3.A.1.24) family. The complex is composed of two ATP-binding proteins (MetN), two transmembrane proteins (MetI) and a solute-binding protein (MetQ).

Its subcellular location is the cell inner membrane. It catalyses the reaction L-methionine(out) + ATP + H2O = L-methionine(in) + ADP + phosphate + H(+). The enzyme catalyses D-methionine(out) + ATP + H2O = D-methionine(in) + ADP + phosphate + H(+). Functionally, part of the ABC transporter complex MetNIQ involved in methionine import. Responsible for energy coupling to the transport system. The protein is Methionine import ATP-binding protein MetN of Legionella pneumophila (strain Lens).